We begin with the raw amino-acid sequence, 198 residues long: UPF0098 protein PH1269 (198 aa).

The protein belongs to the UPF0098 family.

This Pyrococcus horikoshii (strain ATCC 700860 / DSM 12428 / JCM 9974 / NBRC 100139 / OT-3) protein is UPF0098 protein PH1269.